Reading from the N-terminus, the 602-residue chain is Arginine--tRNA ligase (602 aa).

Residues 138–148 carry the 'HIGH' region motif; that stretch reads ANPTGPMHVGH.

It belongs to the class-I aminoacyl-tRNA synthetase family. As to quaternary structure, monomer.

The protein resides in the cytoplasm. It carries out the reaction tRNA(Arg) + L-arginine + ATP = L-arginyl-tRNA(Arg) + AMP + diphosphate. The protein is Arginine--tRNA ligase of Gluconobacter oxydans (strain 621H) (Gluconobacter suboxydans).